The sequence spans 87 residues: MANHKSALKRNRQAAVRNARNTHIRSTMRSLVKMVRVAAASGNQEEAKTALDRAVPYIDKAATKGVIHKATASRKISRLVKLVNTVG.

Residues 1–12 are compositionally biased toward basic residues; that stretch reads MANHKSALKRNR. Residues 1-21 are disordered; that stretch reads MANHKSALKRNRQAAVRNARN.

It belongs to the bacterial ribosomal protein bS20 family.

Binds directly to 16S ribosomal RNA. The protein is Small ribosomal subunit protein bS20 of Syntrophotalea carbinolica (strain DSM 2380 / NBRC 103641 / GraBd1) (Pelobacter carbinolicus).